A 190-amino-acid chain; its full sequence is MEALKEKILKEGKVREGNILKVDCFLNHQMDIKFLNEVGKEFRKRFEGEKVDKILTIEASGIAIAGIASQYFDYVPVVFAKKTESLNLDKDVYESNVHSFTKKKDYKVRVGKQFLNKGERVLIIDDFLAQGCATKGMIDLVEQAGAELVGIGIVIEKGFQDGRKVLEDLGVRVESLAIIDKLEDNKVYFK.

Xanthine is bound by residues leucine 20 and asparagine 27. Residue 129–133 (AQGCA) participates in 5-phospho-alpha-D-ribose 1-diphosphate binding. Lysine 157 serves as a coordination point for xanthine.

It belongs to the purine/pyrimidine phosphoribosyltransferase family. Xpt subfamily. As to quaternary structure, homodimer.

The protein localises to the cytoplasm. The catalysed reaction is XMP + diphosphate = xanthine + 5-phospho-alpha-D-ribose 1-diphosphate. The protein operates within purine metabolism; XMP biosynthesis via salvage pathway; XMP from xanthine: step 1/1. Converts the preformed base xanthine, a product of nucleic acid breakdown, to xanthosine 5'-monophosphate (XMP), so it can be reused for RNA or DNA synthesis. The polypeptide is Xanthine phosphoribosyltransferase 1 (Clostridium perfringens (strain ATCC 13124 / DSM 756 / JCM 1290 / NCIMB 6125 / NCTC 8237 / Type A)).